Here is a 245-residue protein sequence, read N- to C-terminus: 6-carboxyhexanoate--CoA ligase (245 aa).

This sequence belongs to the BioW family. As to quaternary structure, homodimer. Mg(2+) is required as a cofactor.

The catalysed reaction is heptanedioate + ATP + CoA = 6-carboxyhexanoyl-CoA + AMP + diphosphate. The protein operates within metabolic intermediate metabolism; pimeloyl-CoA biosynthesis; pimeloyl-CoA from pimelate: step 1/1. Catalyzes the transformation of pimelate into pimeloyl-CoA with concomitant hydrolysis of ATP to AMP. The sequence is that of 6-carboxyhexanoate--CoA ligase from Sulfurihydrogenibium sp. (strain YO3AOP1).